The sequence spans 491 residues: Ketol-acid reductoisomerase (NADP(+)) (491 aa).

The KARI N-terminal Rossmann domain maps to 15 to 208 (AQLGKCRFMG…GGHRAGVLES (194 aa)). NADP(+)-binding positions include 45 to 48 (CGAQ), Arg68, Arg76, Ser78, and 108 to 110 (DKQ). The active site involves His132. Gly158 lines the NADP(+) pocket. 2 consecutive KARI C-terminal knotted domains span residues 209-344 (SFVA…TAPQ) and 345-484 (FEGK…MTDM). Mg(2+)-binding residues include Asp217, Glu221, Glu389, and Glu393. Substrate is bound at residue Ser414.

It belongs to the ketol-acid reductoisomerase family. It depends on Mg(2+) as a cofactor.

The catalysed reaction is (2R)-2,3-dihydroxy-3-methylbutanoate + NADP(+) = (2S)-2-acetolactate + NADPH + H(+). It carries out the reaction (2R,3R)-2,3-dihydroxy-3-methylpentanoate + NADP(+) = (S)-2-ethyl-2-hydroxy-3-oxobutanoate + NADPH + H(+). It functions in the pathway amino-acid biosynthesis; L-isoleucine biosynthesis; L-isoleucine from 2-oxobutanoate: step 2/4. Its pathway is amino-acid biosynthesis; L-valine biosynthesis; L-valine from pyruvate: step 2/4. In terms of biological role, involved in the biosynthesis of branched-chain amino acids (BCAA). Catalyzes an alkyl-migration followed by a ketol-acid reduction of (S)-2-acetolactate (S2AL) to yield (R)-2,3-dihydroxy-isovalerate. In the isomerase reaction, S2AL is rearranged via a Mg-dependent methyl migration to produce 3-hydroxy-3-methyl-2-ketobutyrate (HMKB). In the reductase reaction, this 2-ketoacid undergoes a metal-dependent reduction by NADPH to yield (R)-2,3-dihydroxy-isovalerate. The protein is Ketol-acid reductoisomerase (NADP(+)) of Salmonella heidelberg (strain SL476).